We begin with the raw amino-acid sequence, 356 residues long: Mannonate dehydratase 2 (356 aa).

Belongs to the mannonate dehydratase family. The cofactor is Fe(2+). Mn(2+) is required as a cofactor.

It carries out the reaction D-mannonate = 2-dehydro-3-deoxy-D-gluconate + H2O. It functions in the pathway carbohydrate metabolism; pentose and glucuronate interconversion. Catalyzes the dehydration of D-mannonate. This is Mannonate dehydratase 2 from Bacillus licheniformis (strain ATCC 14580 / DSM 13 / JCM 2505 / CCUG 7422 / NBRC 12200 / NCIMB 9375 / NCTC 10341 / NRRL NRS-1264 / Gibson 46).